The following is a 264-amino-acid chain: Apolipoprotein A-I (264 aa).

A signal peptide spans 1 to 18; the sequence is MKTVVLAVAVLFLTGSQA. 2 consecutive repeat copies span residues 67–88 and 89–110. A 10 X approximate tandem repeats region spans residues 67 to 264; the sequence is LNLLENWDTL…EEASKKLNAQ (198 aa). Met-109 carries the methionine sulfoxide modification. One copy of the 3; half-length repeat lies at 111 to 121; that stretch reads KDLEEVKAKVQ. 5 repeat units span residues 122–143, 144–165, 166–187, 188–207, and 208–229. Met-193 carries the methionine sulfoxide modification. One copy of the 9; half-length repeat lies at 230–240; the sequence is PALEDLRQGLM. Methionine sulfoxide is present on Met-240. Copy 10 of the repeat occupies 241–264; sequence PVFESFKTRIMSMVEEASKKLNAQ.

This sequence belongs to the apolipoprotein A1/A4/E family. In terms of assembly, homodimer. Interacts with APOA1BP and CLU. Component of a sperm activating protein complex (SPAP), consisting of APOA1, an immunoglobulin heavy chain, an immunoglobulin light chain and albumin. Interacts with NDRG1. Interacts with SCGB3A2. Interacts with NAXE and YJEFN3. Post-translationally, glycosylated. Palmitoylated. In terms of processing, phosphorylation sites are present in the extracellular medium. In terms of tissue distribution, major protein of plasma HDL, also found in chylomicrons.

Its subcellular location is the secreted. Its function is as follows. Participates in the reverse transport of cholesterol from tissues to the liver for excretion by promoting cholesterol efflux from tissues and by acting as a cofactor for the lecithin cholesterol acyltransferase (LCAT). As part of the SPAP complex, activates spermatozoa motility. The polypeptide is Apolipoprotein A-I (APOAI) (Mesocricetus auratus (Golden hamster)).